A 360-amino-acid polypeptide reads, in one-letter code: MTEQKVRKELKTDMPSIYSFELHEMKEWLKEQDEKPFRAAQIFEWLYEKRVTSFDAMSNLSKELREKLKAQFAITTLKTVIKQTSQDGTIKFLFELHDGYTIETVLMRHEYGNSVCVTTQVGCRIGCTFCASTLGGLKRNLEAGEIVAQVLKVQQALDETDERVSSVVIMGIGEPFDNFEEMLAFLKIINHDNGLNIGARHITVSTSGIIPKIYQFADEQMQINFAVSLHAPNTEIRSRLMPINKAYKLPKLMEAIEYYIQKTGRRVSFEYGLFGGVNDQVHHAEELADLLKGIKCHVNLIPVNYVPERDYVRTPREQIFLFEKTLKERGVNVTIRREQGHDIDAACGQLRAKERQEETR.

Glutamate 103 serves as the catalytic Proton acceptor. In terms of domain architecture, Radical SAM core spans 109–342 (HEYGNSVCVT…VTIRREQGHD (234 aa)). A disulfide bond links cysteine 116 and cysteine 347. [4Fe-4S] cluster contacts are provided by cysteine 123, cysteine 127, and cysteine 130. S-adenosyl-L-methionine is bound by residues 173–174 (GE), serine 205, 228–230 (SLH), and asparagine 304. Cysteine 347 acts as the S-methylcysteine intermediate in catalysis.

This sequence belongs to the radical SAM superfamily. RlmN family. Requires [4Fe-4S] cluster as cofactor.

It is found in the cytoplasm. The catalysed reaction is adenosine(2503) in 23S rRNA + 2 reduced [2Fe-2S]-[ferredoxin] + 2 S-adenosyl-L-methionine = 2-methyladenosine(2503) in 23S rRNA + 5'-deoxyadenosine + L-methionine + 2 oxidized [2Fe-2S]-[ferredoxin] + S-adenosyl-L-homocysteine. The enzyme catalyses adenosine(37) in tRNA + 2 reduced [2Fe-2S]-[ferredoxin] + 2 S-adenosyl-L-methionine = 2-methyladenosine(37) in tRNA + 5'-deoxyadenosine + L-methionine + 2 oxidized [2Fe-2S]-[ferredoxin] + S-adenosyl-L-homocysteine. Its function is as follows. Specifically methylates position 2 of adenine 2503 in 23S rRNA and position 2 of adenine 37 in tRNAs. This Bacillus pumilus (strain SAFR-032) protein is Probable dual-specificity RNA methyltransferase RlmN.